A 657-amino-acid chain; its full sequence is uncharacterized protein (657 aa).

A signal peptide spans 1–26; sequence MFGKGLVKKSLLFFSGVSTMAVFLVS. The N-palmitoyl cysteine moiety is linked to residue Cys27. Cys27 carries S-diacylglycerol cysteine lipidation. 3 disordered regions span residues 291–316, 468–496, and 516–563; these read ISPK…FSST, RLSS…DGII, and KSMT…KETN. Positions 294-304 are enriched in polar residues; that stretch reads KQGSDNNSNLS. Residues 469–495 are compositionally biased toward basic and acidic residues; that stretch reads LSSDDTNTKKALKEVSTHKNGSDKDGI. Polar residues predominate over residues 516–525; that stretch reads KSMTDNNSGT. Residues 526–545 show a composition bias toward basic and acidic residues; it reads EQKKNLSEVDTKKKEKESKG. Residues 546–559 show a composition bias toward low complexity; it reads KTQSNGQDSGQQNG.

To T.pallidum TmpC.

It localises to the cell membrane. This is an uncharacterized protein from Mycoplasma pneumoniae (strain ATCC 29342 / M129 / Subtype 1) (Mycoplasmoides pneumoniae).